A 744-amino-acid chain; its full sequence is Cullin-3 (744 aa).

A Cullin neddylation domain is found at 677 to 736 (MELSAIIVRIMKTEGKLSHQQLLERTTKRTQSRLSLTPSILKRSIQLLIEKEYIQRNADD). Lysine 688 is covalently cross-linked (Glycyl lysine isopeptide (Lys-Gly) (interchain with G-Cter in NEDD8)).

Belongs to the cullin family. As to quaternary structure, component of a ubiquitin-protein ligase complex consisting of the cullin CUL3, the linker protein ELC1, the substrate receptor ELA1, and the RING protein HRT1. Neddylated; enhancing the ubiquitin-ligase activity.

The protein operates within protein modification; protein ubiquitination. As part of the CRL3 E3 ubiquitin ligase complex; polyubiquitylates monoubiquitylated RNA polymerase II subunit RPO21 to trigger its proteolysis; plays a role in global genomic repair. In Saccharomyces cerevisiae (strain ATCC 204508 / S288c) (Baker's yeast), this protein is Cullin-3 (CUL3).